The sequence spans 98 residues: Large ribosomal subunit protein bL27 (98 aa).

A propeptide spanning residues 1–13 is cleaved from the precursor; it reads MKKIWFHLDLQFF.

The protein belongs to the bacterial ribosomal protein bL27 family. In terms of processing, the N-terminus is cleaved by ribosomal processing cysteine protease Prp.

The polypeptide is Large ribosomal subunit protein bL27 (Mycoplasmoides gallisepticum (strain R(low / passage 15 / clone 2)) (Mycoplasma gallisepticum)).